Here is a 185-residue protein sequence, read N- to C-terminus: dCTP deaminase (185 aa).

DCTP is bound by residues 107 to 112 (KSTYAR), 131 to 133 (TLE), Gln-152, Tyr-166, and Gln-176. The Proton donor/acceptor role is filled by Glu-133.

It belongs to the dCTP deaminase family. As to quaternary structure, homotrimer.

The catalysed reaction is dCTP + H2O + H(+) = dUTP + NH4(+). Its pathway is pyrimidine metabolism; dUMP biosynthesis; dUMP from dCTP (dUTP route): step 1/2. In terms of biological role, catalyzes the deamination of dCTP to dUTP. This is dCTP deaminase from Wolbachia sp. subsp. Brugia malayi (strain TRS).